A 444-amino-acid polypeptide reads, in one-letter code: L-cysteine:1D-myo-inositol 2-amino-2-deoxy-alpha-D-glucopyranoside ligase (444 aa).

Residues 1 to 13 (MPCDRKTSPDQHH) are compositionally biased toward basic and acidic residues. The disordered stretch occupies residues 1–21 (MPCDRKTSPDQHHALQIHRHH). Cys75 serves as a coordination point for Zn(2+). L-cysteinyl-5'-AMP contacts are provided by residues 75–78 (CGIT), Thr90, and 113–115 (NIT). Residues 77-87 (ITPYDATHLGH) carry the 'HIGH' region motif. The short motif at 219 to 224 (ERGGDP) is the 'ERGGDP' region element. Trp259 contributes to the L-cysteinyl-5'-AMP binding site. Cys263 serves as a coordination point for Zn(2+). Residue 281–283 (GSD) participates in L-cysteinyl-5'-AMP binding. Residue His288 participates in Zn(2+) binding. Residue Ile315 participates in L-cysteinyl-5'-AMP binding. A 'KMSKS' region motif is present at residues 321–325 (KMSKS).

This sequence belongs to the class-I aminoacyl-tRNA synthetase family. MshC subfamily. As to quaternary structure, monomer. Zn(2+) serves as cofactor.

The catalysed reaction is 1D-myo-inositol 2-amino-2-deoxy-alpha-D-glucopyranoside + L-cysteine + ATP = 1D-myo-inositol 2-(L-cysteinylamino)-2-deoxy-alpha-D-glucopyranoside + AMP + diphosphate + H(+). Its function is as follows. Catalyzes the ATP-dependent condensation of GlcN-Ins and L-cysteine to form L-Cys-GlcN-Ins. In Mycolicibacterium gilvum (strain PYR-GCK) (Mycobacterium gilvum (strain PYR-GCK)), this protein is L-cysteine:1D-myo-inositol 2-amino-2-deoxy-alpha-D-glucopyranoside ligase.